Consider the following 64-residue polypeptide: Large ribosomal subunit protein eL37 (64 aa).

Positions 20, 23, 35, and 38 each coordinate Zn(2+). The C4-type zinc finger occupies 20–38; the sequence is CRRCGRRAFHVRKKVCAAC.

Belongs to the eukaryotic ribosomal protein eL37 family. Requires Zn(2+) as cofactor.

Functionally, binds to the 23S rRNA. In Methanococcus maripaludis (strain C6 / ATCC BAA-1332), this protein is Large ribosomal subunit protein eL37.